Consider the following 639-residue polypeptide: Probable potassium transport system protein Kup 1 (639 aa).

Helical transmembrane passes span 27–47 (AILGSIGVVYGDIGTSPLYAF), 64–84 (VIGLTSLMIWSLTIIVTFKYI), 115–135 (VLIVLGLIGAALFLGDAMITP), 151–171 (PAMDDFIIPISVCILIGLFAI), 182–202 (FFGPITAVWFLVMGGAGLIHI), 225–245 (GFYGVVVLGAVFLTITGAEAL), 261–281 (WFCLVFPALTLNYLGQGALVL), 293–313 (LMFPQWAILPAVILATAATII), 351–371 (IYLPAVNTILLFGVVALVLTF), 377–397 (LATAYGISVTGAMVVTSLMFF), 408–428 (IWLALAVLTPLLLLELIFLGA), and 430–450 (LLKIHDGGYVPVLLAIAFTVI).

Belongs to the HAK/KUP transporter (TC 2.A.72) family.

The protein localises to the cell inner membrane. The enzyme catalyses K(+)(in) + H(+)(in) = K(+)(out) + H(+)(out). Functionally, transport of potassium into the cell. Likely operates as a K(+):H(+) symporter. This is Probable potassium transport system protein Kup 1 from Agrobacterium fabrum (strain C58 / ATCC 33970) (Agrobacterium tumefaciens (strain C58)).